The primary structure comprises 38 residues: Photosystem II reaction center protein L (38 aa).

Residues 17-37 (SLYWGLLLIFVLAVLFSSYIF) traverse the membrane as a helical segment.

The protein belongs to the PsbL family. PSII is composed of 1 copy each of membrane proteins PsbA, PsbB, PsbC, PsbD, PsbE, PsbF, PsbH, PsbI, PsbJ, PsbK, PsbL, PsbM, PsbT, PsbY, PsbZ, Psb30/Ycf12, at least 3 peripheral proteins of the oxygen-evolving complex and a large number of cofactors. It forms dimeric complexes.

Its subcellular location is the plastid. It is found in the chloroplast thylakoid membrane. In terms of biological role, one of the components of the core complex of photosystem II (PSII). PSII is a light-driven water:plastoquinone oxidoreductase that uses light energy to abstract electrons from H(2)O, generating O(2) and a proton gradient subsequently used for ATP formation. It consists of a core antenna complex that captures photons, and an electron transfer chain that converts photonic excitation into a charge separation. This subunit is found at the monomer-monomer interface and is required for correct PSII assembly and/or dimerization. This chain is Photosystem II reaction center protein L, found in Euglena gracilis.